Here is a 489-residue protein sequence, read N- to C-terminus: 3-octaprenyl-4-hydroxybenzoate carboxy-lyase (489 aa).

Asn-172 contributes to the Mn(2+) binding site. Prenylated FMN is bound by residues 175–177 (IYR), 189–191 (RWL), and 194–195 (RG). Glu-238 provides a ligand contact to Mn(2+). Asp-287 serves as the catalytic Proton donor.

It belongs to the UbiD family. Homohexamer. Prenylated FMN serves as cofactor. The cofactor is Mn(2+).

It localises to the cell membrane. It carries out the reaction a 4-hydroxy-3-(all-trans-polyprenyl)benzoate + H(+) = a 2-(all-trans-polyprenyl)phenol + CO2. The protein operates within cofactor biosynthesis; ubiquinone biosynthesis. Functionally, catalyzes the decarboxylation of 3-octaprenyl-4-hydroxy benzoate to 2-octaprenylphenol, an intermediate step in ubiquinone biosynthesis. This Aeromonas hydrophila subsp. hydrophila (strain ATCC 7966 / DSM 30187 / BCRC 13018 / CCUG 14551 / JCM 1027 / KCTC 2358 / NCIMB 9240 / NCTC 8049) protein is 3-octaprenyl-4-hydroxybenzoate carboxy-lyase.